Here is a 430-residue protein sequence, read N- to C-terminus: Drebrin-like protein (430 aa).

An ADF-H domain is found at 4–133 (NLSRNGPALQ…EPECIMEKVA (130 aa)). A Phosphothreonine modification is found at Thr26. Residues Gly137 and Ser160 each carry the phosphoserine modification. Lys176 carries the post-translational modification N6-acetyllysine. Residues 176–231 (KDSFWAKAEKEEENRRLEEKRRAEEAQRQLEQERRERELREAARREQRYQEQGGEA) adopt a coiled-coil conformation. Residues Ala183 and Ser232 each carry the phosphoserine modification. The tract at residues 219–283 (RREQRYQEQG…SSPQPGKLRS (65 aa)) is disordered. A compositionally biased stretch (polar residues) spans 233–244 (PQRTWEQQQEVV). The segment covering 245–267 (SRNRNEQESAVHPREIFKQKERA) has biased composition (basic and acidic residues). Positions 268 to 277 (MSTTSISSPQ) are enriched in polar residues. Phosphoserine is present on residues Ser269, Ser272, Ser275, and Ser283. Lys288 is modified (N6-acetyllysine). Thr291 bears the Phosphothreonine mark. Phosphotyrosine is present on residues Tyr334 and Tyr344. Residues 371 to 430 (GQGLCARALYDYQAADDTEISFDPENLITGIEVIDEGWWRGYGPDGHFGMFPANYVELIE) form the SH3 domain.

The protein belongs to the ABP1 family. Interacts with SHANK2, SHANK3 and SYN1. Interacts with FGD1 and DNM1. Interacts with ANKRD54. Interacts with COBL. Interacts with WASL and WIPF1. Interacts with MAP4K1 and PRAM1. Post-translationally, degraded by caspases during apoptosis.

It is found in the cytoplasm. Its subcellular location is the cytoskeleton. The protein localises to the cell projection. It localises to the lamellipodium. The protein resides in the ruffle. It is found in the cell cortex. Its subcellular location is the cytosol. The protein localises to the synapse. It localises to the perikaryon. The protein resides in the neuron projection. It is found in the cell membrane. Its subcellular location is the cytoplasmic vesicle. The protein localises to the clathrin-coated vesicle membrane. It localises to the golgi apparatus membrane. The protein resides in the podosome. It is found in the early endosome. Its subcellular location is the dendrite. The protein localises to the postsynaptic density. Its function is as follows. Adapter protein that binds F-actin and DNM1, and thereby plays a role in receptor-mediated endocytosis. Plays a role in the reorganization of the actin cytoskeleton, formation of cell projections, such as neurites, in neuron morphogenesis and synapse formation via its interaction with WASL and COBL. Does not bind G-actin and promote actin polymerization by itself. Required for the formation of organized podosome rosettes. May act as a common effector of antigen receptor-signaling pathways in leukocytes. Acts as a key component of the immunological synapse that regulates T-cell activation by bridging TCRs and the actin cytoskeleton to gene activation and endocytic processes. The polypeptide is Drebrin-like protein (DBNL) (Homo sapiens (Human)).